Consider the following 157-residue polypeptide: Putative dehydration-responsive element-binding protein 2H (157 aa).

The Nuclear localization signal signature appears at 5–21; that stretch reads RKSRGTRDVAEILRKWR. Residues 29–57 are disordered; that stretch reads ADSCIDGGGSKPIRKAPPKRSRKGCMKGK. Residues 40–54 show a composition bias toward basic residues; sequence PIRKAPPKRSRKGCM. The segment at residues 66–123 is a DNA-binding region (AP2/ERF); the sequence is DYTGVRQRTWGKWVAEIREPGRGAKLWLGTFSSSYEAALAYDEASKAIYGQSARLNLP.

Belongs to the AP2/ERF transcription factor family. ERF subfamily.

The protein localises to the nucleus. Its function is as follows. Putative transcriptional activator that binds specifically to the DNA sequence 5'-[AG]CCGAC-3'. The sequence is that of Putative dehydration-responsive element-binding protein 2H (DREB2H) from Arabidopsis thaliana (Mouse-ear cress).